The following is a 484-amino-acid chain: Crt homolog 2 (484 aa).

Topologically, residues 1 to 57 (MSEEKLPLLSPLNENDIENDYKDENLKSDLDKLSNVKKQSIIQRFKDYLKNSISKQT) are cytoplasmic. The chain crosses the membrane as a helical span at residues 58-78 (ATVLVYVVLYILSGVINSLLL). At 79–94 (KKVMNVFTNYGFFLNQ) the chain is on the vacuolar side. Residues 95 to 115 (LTNYGYVPIFGAIVLYKILFT) traverse the membrane as a helical segment. The Cytoplasmic portion of the chain corresponds to 116–128 (NDIPKDTRSFPQW). Residues 129-149 (KFVIMGALDAVTGYFVVIGGI) traverse the membrane as a helical segment. Residues 150 to 154 (KTTGP) are Vacuolar-facing. The helical transmembrane segment at 155-175 (LQQLLNQSVIPFTMLLSFIFL) threads the bilayer. The Cytoplasmic segment spans residues 176-178 (KER). A helical transmembrane segment spans residues 179-199 (YSLIQLGGALIIIGGVVVSLI). The Vacuolar portion of the chain corresponds to 200-210 (PSLTGGNTSGN). Asn-206 is a glycosylation site (N-linked (GlcNAc...) asparagine). Residues 211-231 (MLFYNFFYLISMIPYAFSNVY) form a helical membrane-spanning segment. Over 232-244 (KAIGFSTVEDMDV) the chain is Cytoplasmic. The helical transmembrane segment at 245–265 (WYLQYFDALYQSLVGTVLFPI) threads the bilayer. The Vacuolar portion of the chain corresponds to 266 to 328 (NNWLPPPSDM…LGCDNCHGAW (63 aa)). The N-linked (GlcNAc...) asparagine glycan is linked to Asn-302. Residues 329-349 (VVVLIYMAVNVLYNVFILLVL) traverse the membrane as a helical segment. Residues 350–355 (KHAGAT) are Cytoplasmic-facing. Residues 356-378 (VFSIANTLRLPLTNIAFSFKFIM) form a helical membrane-spanning segment. The Vacuolar segment spans residues 379-382 (GSDS). A helical transmembrane segment spans residues 383 to 403 (NPFSGLSVAGLCIILLGLGGY). Residues 404–484 (RVGSMIKQKK…RNQNSIYGDQ (81 aa)) lie on the Cytoplasmic side of the membrane.

Belongs to the CRT-like transporter family.

The protein localises to the vacuole membrane. Nutrient transporter. Involved in maintaining the osmotic homeostasis of the digestive vacuole. This is Crt homolog 2 (crtp2) from Dictyostelium discoideum (Social amoeba).